Reading from the N-terminus, the 476-residue chain is Bifunctional protein HldE (476 aa).

The ribokinase stretch occupies residues 1–319 (MKVSLPAFEK…EALALHHGES (319 aa)). 195–198 (NMSE) serves as a coordination point for ATP. Residue Asp264 is part of the active site. The segment at 345–476 (MTNGCFDILH…AIIQNIMANQ (132 aa)) is cytidylyltransferase.

In the N-terminal section; belongs to the carbohydrate kinase PfkB family. The protein in the C-terminal section; belongs to the cytidylyltransferase family. In terms of assembly, homodimer.

The enzyme catalyses D-glycero-beta-D-manno-heptose 7-phosphate + ATP = D-glycero-beta-D-manno-heptose 1,7-bisphosphate + ADP + H(+). It catalyses the reaction D-glycero-beta-D-manno-heptose 1-phosphate + ATP + H(+) = ADP-D-glycero-beta-D-manno-heptose + diphosphate. The protein operates within nucleotide-sugar biosynthesis; ADP-L-glycero-beta-D-manno-heptose biosynthesis; ADP-L-glycero-beta-D-manno-heptose from D-glycero-beta-D-manno-heptose 7-phosphate: step 1/4. It participates in nucleotide-sugar biosynthesis; ADP-L-glycero-beta-D-manno-heptose biosynthesis; ADP-L-glycero-beta-D-manno-heptose from D-glycero-beta-D-manno-heptose 7-phosphate: step 3/4. Functionally, catalyzes the phosphorylation of D-glycero-D-manno-heptose 7-phosphate at the C-1 position to selectively form D-glycero-beta-D-manno-heptose-1,7-bisphosphate. In terms of biological role, catalyzes the ADP transfer from ATP to D-glycero-beta-D-manno-heptose 1-phosphate, yielding ADP-D-glycero-beta-D-manno-heptose. In Shewanella sp. (strain W3-18-1), this protein is Bifunctional protein HldE.